A 686-amino-acid polypeptide reads, in one-letter code: Osmo-dependent choline transporter BetT2 (686 aa).

Residues 1–22 (MATDNPRAVDDQETHPKDRLNR) are Cytoplasmic-facing. Residues 23–43 (VVFYVSALIILIFSLTTILFN) form a helical membrane-spanning segment. The Periplasmic segment spans residues 44 to 60 (DFANRALNQVLDWVSST). The chain crosses the membrane as a helical span at residues 61 to 81 (FSWYYLLAATLYMVFVIFIAC). Topologically, residues 82-100 (SRYGNIKLGPKHSKPEFSL) are cytoplasmic. Residues 101–121 (LSWSAMLFSAGIGIDLMFFSV) form a helical membrane-spanning segment. The Periplasmic portion of the chain corresponds to 122–150 (AEPLSHYMHPPVGEGQTYEAARQGMVWTL). The helical transmembrane segment at 151-171 (FHYGLTGWCMYALIGMALGYF) threads the bilayer. The Cytoplasmic segment spans residues 172-203 (SYRYNLPLTIRSALYPIFGKKINGPIGHSVDT). Residues 204 to 224 (AAVIGTIFGIATTCGIGVVQL) form a helical membrane-spanning segment. Residues 225-237 (NYGLHVLFDLPEN) are Periplasmic-facing. The chain crosses the membrane as a helical span at residues 238-258 (LWVQTALILVAVIITIISVTS). Residues 259–265 (GVNKGLR) lie on the Cytoplasmic side of the membrane. Residues 266 to 286 (ILSEVNIYVSVGLMLFILFLG) form a helical membrane-spanning segment. At 287-325 (NTEFLLNALVQNVGDYLSRFPSLALESFAFDQPKEWMNS) the chain is on the periplasmic side. Residues 326–346 (WTLFFWAWWVAWSPFVGLFLA) traverse the membrane as a helical segment. Residues 347–356 (RISRGRTIRE) lie on the Cytoplasmic side of the membrane. The helical transmembrane segment at 357 to 377 (FVSGTLIIPLLFTLTWLSIFG) threads the bilayer. The Periplasmic segment spans residues 378-412 (NSALHNVIFDGNIALAETVLSNPAHGFYDLLAQYP). The chain crosses the membrane as a helical span at residues 413 to 433 (WFPFIAGVATITGLLFYVTSA). Topologically, residues 434 to 459 (DSGALVLGNFTTQFTNIDHDAPRWLS) are cytoplasmic. The chain crosses the membrane as a helical span at residues 460–480 (VFWAVAIGLLTLAMLMTNGIT). Topologically, residues 481-484 (ALQN) are periplasmic. The helical transmembrane segment at 485–505 (ATIIMGLPFSFVMFLVMAGLY) threads the bilayer. Residues 506–686 (KSLRLEDYRQ…NRPLFPDPKA (181 aa)) are Cytoplasmic-facing.

This sequence belongs to the BCCT transporter (TC 2.A.15) family.

The protein localises to the cell inner membrane. Uptake of choline in the presence of high salinity. May primarily serve for osmoprotection. The protein is Osmo-dependent choline transporter BetT2 of Acinetobacter baylyi (strain ATCC 33305 / BD413 / ADP1).